The primary structure comprises 509 residues: Transcription factor SOX-9 (509 aa).

Disordered stretches follow at residues 1 to 67 (MNLL…SEED) and 160 to 273 (RLRV…FRDV). The span at 30 to 41 (SAGSPCPSGSGS) shows a compositional bias: low complexity. Positions 42–52 (DTENTRPQENT) are enriched in polar residues. Basic and acidic residues-rich tracts occupy residues 56–67 (GEPDLKKESEED) and 160–174 (RLRV…DYKY). Residues 63–103 (ESEEDKFPVCIREAVSQVLKGYDWTLVPMPVRVNGSSKNKP) are dimerization (DIM). Positions 63 to 103 (ESEEDKFPVCIREAVSQVLKGYDWTLVPMPVRVNGSSKNKP) are PQA. Serine 64 carries the post-translational modification Phosphoserine. Residues 105 to 173 (VKRPMNAFMV…QHKKDHPDYK (69 aa)) constitute a DNA-binding region (HMG box). Serine 211 is subject to Phosphoserine. The tract at residues 224 to 307 (PGEHSGQSQG…LPPNGHPGVP (84 aa)) is transactivation domain (TAM). 2 short sequence motifs (9aaTAD) span residues 275-284 (IGELSSDVIS) and 290-298 (DVNEFDQYL). The disordered stretch occupies residues 330-415 (SAGHVWMSKQ…HYSEQQQHSP (86 aa)). Residues 341 to 376 (APPPPPQQPPQAPPAPQAPPQPQAAPPQQPAAPPQQ) show a composition bias toward pro residues. Residues 380–415 (HTLTTLSSEPGQSQRTHIKTEQLSPSHYSEQQQHSP) show a composition bias toward polar residues. Positions 394–509 (RTHIKTEQLS…QPVYTQLTRP (116 aa)) are transactivation domain (TAC). A Glycyl lysine isopeptide (Lys-Gly) (interchain with G-Cter in ubiquitin) cross-link involves residue lysine 398. The 9aaTAD 3 motif lies at 460 to 468 (TGLYSTFTY). The segment at 479–509 (PIADTSGVPSIPQTHSPQHWEQPVYTQLTRP) is disordered. Residues 485-509 (GVPSIPQTHSPQHWEQPVYTQLTRP) are compositionally biased toward polar residues.

As to quaternary structure, homodimer; homodimerization is required for activity. Interacts (via C-terminus) with ZNF219; forming a complex that binds to the COL2A1 promoter and activates COL2A1 expression. Interacts with DDRGK1. Interacts with EP300/p300. Interacts with beta-catenin (CTNNB1); inhibiting CTNNB1 activity by competing with the binding sites of TCF/LEF within CTNNB1. Post-translationally, acetylated; acetylation impairs nuclear localization and ability to transactivate expression of target genes. Deacetylated by SIRT1. In terms of processing, phosphorylation at Ser-64 and Ser-211 by PKA increases transcriptional activity and may help delay chondrocyte maturation downstream of PTHLH/PTHrP signaling. Phosphorylation at either Ser-64 or Ser-211 is required for sumoylation, but phosphorylation is not dependent on sumoylation. Phosphorylated on tyrosine residues; tyrosine dephosphorylation by PTPN11/SHP2 blocks SOX9 phosphorylation by PKA and subsequent SUMOylation. Ubiquitinated; ubiquitination leads to proteasomal degradation and is negatively regulated by DDRGK1. Post-translationally, sumoylated; phosphorylation at either Ser-64 or Ser-211 is required for sumoylation. Sumoylation is induced by BMP signaling pathway.

The protein localises to the nucleus. Functionally, transcription factor that plays a key role in chondrocytes differentiation and skeletal development. Specifically binds the 5'-ACAAAG-3' DNA motif present in enhancers and super-enhancers and promotes expression of genes important for chondrogenesis, including cartilage matrix protein-coding genes COL2A1, COL4A2, COL9A1, COL11A2 and ACAN, SOX5 and SOX6. Also binds to some promoter regions. Plays a central role in successive steps of chondrocyte differentiation. Absolutely required for precartilaginous condensation, the first step in chondrogenesis during which skeletal progenitors differentiate into prechondrocytes. Together with SOX5 and SOX6, required for overt chondrogenesis when condensed prechondrocytes differentiate into early stage chondrocytes, the second step in chondrogenesis. Later, required to direct hypertrophic maturation and block osteoblast differentiation of growth plate chondrocytes: maintains chondrocyte columnar proliferation, delays prehypertrophy and then prevents osteoblastic differentiation of chondrocytes by lowering beta-catenin (CTNNB1) signaling and RUNX2 expression. Also required for chondrocyte hypertrophy, both indirectly, by keeping the lineage fate of chondrocytes, and directly, by remaining present in upper hypertrophic cells and transactivating COL10A1 along with MEF2C. Low lipid levels are the main nutritional determinant for chondrogenic commitment of skeletal progenitor cells: when lipids levels are low, FOXO (FOXO1 and FOXO3) transcription factors promote expression of SOX9, which induces chondrogenic commitment and suppresses fatty acid oxidation. Mechanistically, helps, but is not required, to remove epigenetic signatures of transcriptional repression and deposit active promoter and enhancer marks at chondrocyte-specific genes. Acts in cooperation with the Hedgehog pathway-dependent GLI (GLI1 and GLI3) transcription factors. In addition to cartilage development, also acts as a regulator of proliferation and differentiation in epithelial stem/progenitor cells: involved in the lung epithelium during branching morphogenesis, by balancing proliferation and differentiation and regulating the extracellular matrix. Controls epithelial branching during kidney development. The polypeptide is Transcription factor SOX-9 (Homo sapiens (Human)).